The primary structure comprises 260 residues: Protein phosphatase 1 regulatory subunit 35 (260 aa).

Residues 1 to 100 (MMGFGASALE…PLLVAGAPGD (100 aa)) are disordered. Phosphoserine occurs at positions 46 and 53. Positions 64–76 (RKGRRGGSRRGRQ) are enriched in basic residues.

The protein belongs to the PPP1R35 family. As to quaternary structure, interacts with PPP1CA; this interaction mediates the PPP1CA phosphatase activity inhibition. Interacts with RTTN; this interaction allows the mutual recruitment to the centriole.

Its subcellular location is the cytoplasm. It localises to the cytoskeleton. The protein resides in the microtubule organizing center. It is found in the centrosome. The protein localises to the centriole. Its function is as follows. During centriole duplication, plays a role in the centriole elongation by promoting the recruitment of the microtubule-binding elongation machinery through its interaction with TTTN, leading to the centriole to centrosome conversion. In addition may play a role in the primary cilia assembly. In Mus musculus (Mouse), this protein is Protein phosphatase 1 regulatory subunit 35.